The following is a 497-amino-acid chain: Apolipoprotein N-acyltransferase (497 aa).

6 helical membrane passes run Phe-21–Trp-41, Ala-51–Val-71, Val-85–Ile-105, Gly-119–Phe-139, Phe-157–Leu-177, and Phe-189–Thr-209. Residues Leu-221 to Gly-461 form the CN hydrolase domain. The active-site Proton acceptor is the Glu-259. Lys-319 is an active-site residue. Cys-371 (nucleophile) is an active-site residue. The chain crosses the membrane as a helical span at residues Ser-472–Gly-492.

It belongs to the CN hydrolase family. Apolipoprotein N-acyltransferase subfamily.

It is found in the cell inner membrane. The enzyme catalyses N-terminal S-1,2-diacyl-sn-glyceryl-L-cysteinyl-[lipoprotein] + a glycerophospholipid = N-acyl-S-1,2-diacyl-sn-glyceryl-L-cysteinyl-[lipoprotein] + a 2-acyl-sn-glycero-3-phospholipid + H(+). The protein operates within protein modification; lipoprotein biosynthesis (N-acyl transfer). Catalyzes the phospholipid dependent N-acylation of the N-terminal cysteine of apolipoprotein, the last step in lipoprotein maturation. The polypeptide is Apolipoprotein N-acyltransferase (Nitrosomonas europaea (strain ATCC 19718 / CIP 103999 / KCTC 2705 / NBRC 14298)).